Reading from the N-terminus, the 559-residue chain is ATP synthase subunit beta-3, mitochondrial (559 aa).

A compositionally biased stretch (low complexity) spans 1 to 28 (MASRRILSSLLRSSSSRSTSKSSLIGSR). Residues 1 to 39 (MASRRILSSLLRSSSSRSTSKSSLIGSRNPRLLSPGPAH) are disordered. The transit peptide at 1–54 (MASRRILSSLLRSSSSRSTSKSSLIGSRNPRLLSPGPAHGAAPCGTLLGRVAEY) directs the protein to the mitochondrion. At serine 62 the chain carries Phosphoserine. An ATP-binding site is contributed by 234–241 (GGAGVGKT).

It belongs to the ATPase alpha/beta chains family. F-type ATPases have 2 components, CF(1) - the catalytic core - and CF(0) - the membrane proton channel. CF(1) has five subunits: alpha(3), beta(3), gamma(1), delta(1), epsilon(1). CF(0) has three main subunits: a, b and c.

Its subcellular location is the mitochondrion. It is found in the mitochondrion inner membrane. The catalysed reaction is ATP + H2O + 4 H(+)(in) = ADP + phosphate + 5 H(+)(out). In terms of biological role, mitochondrial membrane ATP synthase (F(1)F(0) ATP synthase or Complex V) produces ATP from ADP in the presence of a proton gradient across the membrane which is generated by electron transport complexes of the respiratory chain. F-type ATPases consist of two structural domains, F(1) - containing the extramembraneous catalytic core, and F(0) - containing the membrane proton channel, linked together by a central stalk and a peripheral stalk. During catalysis, ATP synthesis in the catalytic domain of F(1) is coupled via a rotary mechanism of the central stalk subunits to proton translocation. Subunits alpha and beta form the catalytic core in F(1). Rotation of the central stalk against the surrounding alpha(3)beta(3) subunits leads to hydrolysis of ATP in three separate catalytic sites on the beta subunits. The sequence is that of ATP synthase subunit beta-3, mitochondrial from Arabidopsis thaliana (Mouse-ear cress).